We begin with the raw amino-acid sequence, 273 residues long: Undecaprenyl-diphosphatase (273 aa).

The next 7 helical transmembrane spans lie at 6–26, 45–65, 90–110, 116–136, 190–210, 222–242, and 252–272; these read SLLI…LPVS, AKTF…VMFW, LTLI…LVFH, LFNP…LIAA, YAAS…ATVL, ADIP…LIAI, and ISFI…YVVF.

Belongs to the UppP family.

It localises to the cell inner membrane. It carries out the reaction di-trans,octa-cis-undecaprenyl diphosphate + H2O = di-trans,octa-cis-undecaprenyl phosphate + phosphate + H(+). Its function is as follows. Catalyzes the dephosphorylation of undecaprenyl diphosphate (UPP). Confers resistance to bacitracin. The chain is Undecaprenyl-diphosphatase from Salmonella heidelberg (strain SL476).